We begin with the raw amino-acid sequence, 97 residues long: Co-chaperonin GroES (97 aa).

Belongs to the GroES chaperonin family. As to quaternary structure, heptamer of 7 subunits arranged in a ring. Interacts with the chaperonin GroEL.

The protein resides in the cytoplasm. Together with the chaperonin GroEL, plays an essential role in assisting protein folding. The GroEL-GroES system forms a nano-cage that allows encapsulation of the non-native substrate proteins and provides a physical environment optimized to promote and accelerate protein folding. GroES binds to the apical surface of the GroEL ring, thereby capping the opening of the GroEL channel. The chain is Co-chaperonin GroES from Salmonella agona (strain SL483).